The primary structure comprises 431 residues: Histidine--tRNA ligase (431 aa).

It belongs to the class-II aminoacyl-tRNA synthetase family. Homodimer.

The protein resides in the cytoplasm. The enzyme catalyses tRNA(His) + L-histidine + ATP = L-histidyl-tRNA(His) + AMP + diphosphate + H(+). The protein is Histidine--tRNA ligase of Neisseria meningitidis serogroup C / serotype 2a (strain ATCC 700532 / DSM 15464 / FAM18).